Consider the following 183-residue polypeptide: Peptidyl-tRNA hydrolase (183 aa).

TRNA is bound at residue tyrosine 14. Residue histidine 19 is the Proton acceptor of the active site. Residues phenylalanine 64 and asparagine 66 each contribute to the tRNA site.

Belongs to the PTH family. As to quaternary structure, monomer.

It is found in the cytoplasm. It carries out the reaction an N-acyl-L-alpha-aminoacyl-tRNA + H2O = an N-acyl-L-amino acid + a tRNA + H(+). Functionally, hydrolyzes ribosome-free peptidyl-tRNAs (with 1 or more amino acids incorporated), which drop off the ribosome during protein synthesis, or as a result of ribosome stalling. Its function is as follows. Catalyzes the release of premature peptidyl moieties from peptidyl-tRNA molecules trapped in stalled 50S ribosomal subunits, and thus maintains levels of free tRNAs and 50S ribosomes. In Syntrophomonas wolfei subsp. wolfei (strain DSM 2245B / Goettingen), this protein is Peptidyl-tRNA hydrolase.